Reading from the N-terminus, the 265-residue chain is Cell adhesion molecule CEACAM7 (265 aa).

An N-terminal signal peptide occupies residues 1-35 (MGSPSACPYRVCIPWQGLLLTASLLTFWNLPNSAQ). One can recognise an Ig-like V-type domain in the interval 36–142 (TNIDVVPFNV…EEVTRQFYVF (107 aa)). Residues asparagine 57, asparagine 85, asparagine 105, asparagine 112, asparagine 174, asparagine 183, and asparagine 198 are each glycosylated (N-linked (GlcNAc...) asparagine). The 88-residue stretch at 146–233 (PKPSITSNNF…ASRSDPVTLN (88 aa)) folds into the Ig-like C2-type domain. Residues cysteine 168 and cysteine 216 are joined by a disulfide bond. Residue serine 242 is the site of GPI-anchor amidated serine attachment. Residues 243–265 (SPDLSAGTAVSIMIGVLAGMALI) constitute a propeptide, removed in mature form.

Belongs to the immunoglobulin superfamily. CEA family. Homodimer. Expressed in columnar epithelial cells of the colon (at protein level). Strongly down-regulated in colonic adenocarcinomas.

The protein localises to the cell membrane. Its subcellular location is the apical cell membrane. This is Cell adhesion molecule CEACAM7 from Homo sapiens (Human).